Here is a 364-residue protein sequence, read N- to C-terminus: MVQVSTHSATQSIPMEGEALKNWLQTRANQIIAGDRLSKQEALALTAIEGQENIFSLCEAADRIRQACCGNTVDLCSIINIKSGSCSENCSFCSQSVHHPGQDSPIYGLKSREEIVTHAKAAADAGAKRFCLVSQGRGLKYNSPKSQEFEEILATVQEIIETAKIKPCCALGELTLPQAQALKEAGVTRYNHNLEASENFYPNVVSTHSWQDRVETVKNLKAAGIQACTGGIIGMGESWTDRIDLAFSLAELEVESVPINLLNPRSGTPLGHLPKLEPFTALKAIAIFRFILPQQILRYAGGREAVMGELQNLGLKSGINAMLIGHYLTTLGQPPQQDQAMLADLSLIGGEAPIPGEYQPQQAT.

Residues cysteine 68–arginine 303 form the Radical SAM core domain. [4Fe-4S] cluster contacts are provided by cysteine 86, cysteine 90, and cysteine 93. Residues cysteine 131, cysteine 168, cysteine 228, and arginine 298 each coordinate [2Fe-2S] cluster.

The protein belongs to the radical SAM superfamily. Biotin synthase family. As to quaternary structure, homodimer. Requires [4Fe-4S] cluster as cofactor. It depends on [2Fe-2S] cluster as a cofactor.

It catalyses the reaction (4R,5S)-dethiobiotin + (sulfur carrier)-SH + 2 reduced [2Fe-2S]-[ferredoxin] + 2 S-adenosyl-L-methionine = (sulfur carrier)-H + biotin + 2 5'-deoxyadenosine + 2 L-methionine + 2 oxidized [2Fe-2S]-[ferredoxin]. It functions in the pathway cofactor biosynthesis; biotin biosynthesis; biotin from 7,8-diaminononanoate: step 2/2. Its function is as follows. Catalyzes the conversion of dethiobiotin (DTB) to biotin by the insertion of a sulfur atom into dethiobiotin via a radical-based mechanism. The chain is Biotin synthase from Microcystis aeruginosa (strain NIES-843 / IAM M-2473).